Consider the following 375-residue polypeptide: Succinyl-diaminopimelate desuccinylase (375 aa).

His-66 provides a ligand contact to Zn(2+). Residue Asp-68 is part of the active site. Position 99 (Asp-99) interacts with Zn(2+). The active-site Proton acceptor is the Glu-133. Positions 134, 162, and 348 each coordinate Zn(2+).

This sequence belongs to the peptidase M20A family. DapE subfamily. Homodimer. Zn(2+) serves as cofactor. Requires Co(2+) as cofactor.

It carries out the reaction N-succinyl-(2S,6S)-2,6-diaminopimelate + H2O = (2S,6S)-2,6-diaminopimelate + succinate. The protein operates within amino-acid biosynthesis; L-lysine biosynthesis via DAP pathway; LL-2,6-diaminopimelate from (S)-tetrahydrodipicolinate (succinylase route): step 3/3. Catalyzes the hydrolysis of N-succinyl-L,L-diaminopimelic acid (SDAP), forming succinate and LL-2,6-diaminopimelate (DAP), an intermediate involved in the bacterial biosynthesis of lysine and meso-diaminopimelic acid, an essential component of bacterial cell walls. This is Succinyl-diaminopimelate desuccinylase from Escherichia coli (strain SE11).